A 338-amino-acid chain; its full sequence is UDP-glucose 4-epimerase (338 aa).

NAD(+) contacts are provided by residues Y11–I12, D31–S36, D58–I59, F80–K84, N99, S124, Y149, K153, and F178. Substrate-binding residues include S124 and Y149. Y149 functions as the Proton acceptor in the catalytic mechanism. Residues N179, N199–L200, A216–F218, R231, R292–D295, and Y299 each bind substrate.

Belongs to the NAD(P)-dependent epimerase/dehydratase family. In terms of assembly, homodimer. Requires NAD(+) as cofactor.

It catalyses the reaction UDP-alpha-D-glucose = UDP-alpha-D-galactose. The protein operates within carbohydrate metabolism; galactose metabolism. Inhibited by UDP-phenol and NaBH3CN. Involved in the metabolism of galactose. Catalyzes the conversion of UDP-galactose (UDP-Gal) to UDP-glucose (UDP-Glc) through a mechanism involving the transient reduction of NAD. It is only active on UDP-galactose and UDP-glucose. The chain is UDP-glucose 4-epimerase (galE) from Escherichia coli (strain K12).